A 461-amino-acid chain; its full sequence is MKIRHLLLLAGLVSAPAIVAAQQTALPSSSAAQASGDDDGGLTGSVSDESEWQDLGIAIPSFPTNASVPTAAEGGTTEALGRNVARVVFNDLKNNGLFKPVGPDALPAIAFPQVAAPAFDAWRGRSAEMLVQGFVKANEDGRLTVGCYLYDVALGSELARQGYVVKPEEWRRAAHKCADMVYSRLSGESPFFDSKIAYIAETGPKDRRRKQLAIMDSDGANHRFITNGQATALTPRYSPDYSQIVYLSYLNGAPRIYIYNIGTGQQKLVTSSTNPTFAPRWSPDGKWILYSMSVAGNTDIYRVSVNGGASTRLTDSPGIDVGGSYSPDGSRIVFESDRSGSQQLYVMNADGSNQKRISFFGGRAATPEWSPRGDQIAFTHLGGNFRIAVTDPSGGNMRFLTDSWQDEAPTWSPNGRIVQFFRTERGSGKTGIWQVDLTGRNERKLNTPVDGSDPAWGPVLP.

The first 20 residues, 1–20, serve as a signal peptide directing secretion; the sequence is MKIRHLLLLAGLVSAPAIVA. Residues 28-47 are disordered; the sequence is SSSAAQASGDDDGGLTGSVS.

Belongs to the TolB family. The Tol-Pal system is composed of five core proteins: the inner membrane proteins TolA, TolQ and TolR, the periplasmic protein TolB and the outer membrane protein Pal. They form a network linking the inner and outer membranes and the peptidoglycan layer.

The protein localises to the periplasm. Its function is as follows. Part of the Tol-Pal system, which plays a role in outer membrane invagination during cell division and is important for maintaining outer membrane integrity. This Novosphingobium aromaticivorans (strain ATCC 700278 / DSM 12444 / CCUG 56034 / CIP 105152 / NBRC 16084 / F199) protein is Tol-Pal system protein TolB 2.